We begin with the raw amino-acid sequence, 625 residues long: tRNA uridine 5-carboxymethylaminomethyl modification enzyme MnmG (625 aa).

FAD is bound by residues 9-14, Val-121, and Ser-176; that span reads GGGHAG. Residue 270–284 participates in NAD(+) binding; it reads GPRYCPSIEDKIYRF. Gln-367 is a binding site for FAD.

Belongs to the MnmG family. Homodimer. Heterotetramer of two MnmE and two MnmG subunits. FAD serves as cofactor.

The protein localises to the cytoplasm. NAD-binding protein involved in the addition of a carboxymethylaminomethyl (cmnm) group at the wobble position (U34) of certain tRNAs, forming tRNA-cmnm(5)s(2)U34. The sequence is that of tRNA uridine 5-carboxymethylaminomethyl modification enzyme MnmG from Nitratiruptor sp. (strain SB155-2).